A 258-amino-acid chain; its full sequence is Putative L-lactate dehydrogenase operon regulatory protein (258 aa).

In terms of domain architecture, HTH gntR-type spans R6 to R74. The segment at residues E34–A53 is a DNA-binding region (H-T-H motif).

May be a regulatory protein for the LCT genes. The sequence is that of Putative L-lactate dehydrogenase operon regulatory protein (lldR) from Escherichia coli (strain K12).